Here is a 93-residue protein sequence, read N- to C-terminus: UPF0358 protein BBR47_22520 (93 aa).

The protein belongs to the UPF0358 family.

This chain is UPF0358 protein BBR47_22520, found in Brevibacillus brevis (strain 47 / JCM 6285 / NBRC 100599).